Reading from the N-terminus, the 1168-residue chain is ATP-dependent DNA helicase mph1 (1168 aa).

Composition is skewed to polar residues over residues 24–38 (NITS…QLAS) and 59–68 (PTVSQGQATA). Positions 24-132 (NITSHHPSNS…PFRADMPPEQ (109 aa)) are disordered. Low complexity predominate over residues 71–88 (RAKTASKPTTSATTSRPS). Positions 89 to 104 (LAQSSQRKNLRQTTLW) are enriched in polar residues. Positions 162–330 (IVKNGLFNNT…DVIDNLGISH (169 aa)) constitute a Helicase ATP-binding domain. 175 to 182 (LPTGLGKT) contributes to the ATP binding site. The short motif at 278-281 (DEAH) is the DEAH box element. In terms of domain architecture, Helicase C-terminal spans 506 to 665 (LVNHFMDAGE…GSRFTFRHDL (160 aa)). Disordered regions lie at residues 690-717 (SQNP…FNMP) and 830-1168 (APAN…DDQE). A compositionally biased stretch (basic residues) spans 701-714 (SAARMRTKPAKKKF). Over residues 895 to 907 (TAKTKSTGVSKQT) the composition is skewed to polar residues. Acidic residues predominate over residues 920–936 (DCEEGGNEYDGNVDDDE). Positions 941–959 (RNFRSKGRGRGSGRGKKSQ) are enriched in basic residues. The span at 985–996 (GSDDGADLEDFI) shows a compositional bias: acidic residues. The segment covering 1001-1030 (EVTSSLQHRPRGSTSPTTAPDAGSSSLSSK) has biased composition (polar residues).

This sequence belongs to the DEAD box helicase family. DEAH subfamily. FANCM sub-subfamily. As to quaternary structure, interacts with the MHF histone-fold complex to form the FANCM-MHF complex.

The protein localises to the nucleus. It carries out the reaction ATP + H2O = ADP + phosphate + H(+). ATP-dependent DNA helicase involved in DNA damage repair by homologous recombination and in genome maintenance. Capable of unwinding D-loops. Plays a role in limiting crossover recombinants during mitotic DNA double-strand break (DSB) repair. Component of a FANCM-MHF complex which promotes gene conversion at blocked replication forks, probably by reversal of the stalled fork. The chain is ATP-dependent DNA helicase mph1 from Neurospora crassa (strain ATCC 24698 / 74-OR23-1A / CBS 708.71 / DSM 1257 / FGSC 987).